We begin with the raw amino-acid sequence, 314 residues long: Bifunctional riboflavin kinase/FMN adenylyltransferase (314 aa).

The protein belongs to the RibF family.

It catalyses the reaction riboflavin + ATP = FMN + ADP + H(+). The enzyme catalyses FMN + ATP + H(+) = FAD + diphosphate. It participates in cofactor biosynthesis; FAD biosynthesis; FAD from FMN: step 1/1. Its pathway is cofactor biosynthesis; FMN biosynthesis; FMN from riboflavin (ATP route): step 1/1. Functionally, catalyzes the phosphorylation of riboflavin to FMN followed by the adenylation of FMN to FAD. Can also catalyze the phosphorylation of the toxic riboflavin analogs 8-demethyl-8-aminoriboflavin (AF) to 8-demethyl-8-aminoriboflavin mononucleotide (AFMN) and roseoflavin (RoF) to roseoflavin mononucleotide (RoFMN), and the adenylation of AFMN to 8-demethyl-8-aminoriboflavin adenine dinucleotide (AFAD). The sequence is that of Bifunctional riboflavin kinase/FMN adenylyltransferase from Listeria monocytogenes serovar 1/2a (strain ATCC BAA-679 / EGD-e).